Reading from the N-terminus, the 899-residue chain is 1,4-alpha-glucan-branching enzyme 3, chloroplastic/amyloplastic (899 aa).

Residues 1 to 49 constitute a chloroplast transit peptide; sequence MVSLSNQTRFSFHPNNLVVSEKRRLGISGVNFPRKIKLKITCFAAERPR. A disordered region spans residues 47–67; sequence RPRQEKQKKKSQSQSTSDAEA. The active-site Proton donor is the E612.

Belongs to the glycosyl hydrolase 13 family. GlgB subfamily. As to quaternary structure, monomer. As to expression, mostly expressed in flowers and inflorescence, and, to a lower extent, in seedlings, roots, stems, leaves, siliques and seeds.

The protein resides in the plastid. It is found in the chloroplast stroma. The protein localises to the amyloplast. It catalyses the reaction Transfers a segment of a (1-&gt;4)-alpha-D-glucan chain to a primary hydroxy group in a similar glucan chain.. It participates in glycan biosynthesis; starch biosynthesis. Catalyzes the formation of the alpha-1,6-glucosidic linkages in starch by scission of a 1,4-alpha-linked oligosaccharide from growing alpha-1,4-glucan chains and the subsequent attachment of the oligosaccharide to the alpha-1,6 position. Essential during embryogenesis. The polypeptide is 1,4-alpha-glucan-branching enzyme 3, chloroplastic/amyloplastic (SBE3) (Arabidopsis thaliana (Mouse-ear cress)).